The sequence spans 218 residues: Tubulin polymerization-promoting protein (218 aa).

The disordered stretch occupies residues 1–45 (MADSKAKPTKAANKTPPKSPGDPAKAAKRLSLESEGANEGAAAAP). Residues 2–115 (ADSKAKPTKA…SCRTITFEQF (114 aa)) are mediates interaction with LIMK1. Thr-15 carries the phosphothreonine modification. Ser-19, Ser-31, and Ser-34 each carry phosphoserine. A compositionally biased stretch (low complexity) spans 33 to 45 (ESEGANEGAAAAP). Zn(2+) is bound by residues His-60, His-71, Cys-79, and Cys-82. Thr-91 is modified (phosphothreonine). Ser-106 carries the post-translational modification Phosphoserine. O-linked (GlcNAc) serine glycosylation occurs at Ser-151. A phosphoserine mark is found at Ser-158 and Ser-159. Residues 165–192 (LTDTSKFTGSHKERFDQSGKGKGKAGRV) form a disordered region. Residues 174–183 (SHKERFDQSG) show a composition bias toward basic and acidic residues.

The protein belongs to the TPPP family. Homodimer. Binds tubulin; binding is inhibited by GTP. Interacts with MAPK1. Interacts with GAPDH; the interaction is direct. Interacts with LIMK1 (via the PDZ domain); the interaction is direct. Interacts with LIMK2. Interacts with HDAC6; thereby inhibiting the tubulin deacetylase activity of HDAC6. Interacts with aggregated SNCA; may have a pro-aggregatory role in synucleinopathies. Interacts with DYNLL1. Interacts (via C-terminus) with S100A2, S100A6 and S100B; these interactions inhibit TPPP dimerization. The cofactor is Mg(2+). Post-translationally, phosphorylated by LIMK1 on serine residues; phosphorylation may alter the tubulin polymerization activity. Phosphorylation by LIMK2, but not LIMK1, regulates astral microtubule organization at early stage of mitosis. Phosphorylation by ROCK1 at Ser-31, Ser-106 and Ser-158 inhibits interaction with HDAC6, resulting in decreased acetylation of tubulin, increased cell motility and entry into S-phase. Phosphorylation by CDK1 inhibits the microtubule polymerizing activity. Degraded by the proteasome; zinc-binding inhibits degradation by the proteasome. Predominantly expressed in mature oligodendrocytes.

It is found in the golgi outpost. It localises to the cytoplasm. The protein resides in the cytoskeleton. Its subcellular location is the microtubule organizing center. The protein localises to the nucleus. It is found in the spindle. It catalyses the reaction GTP + H2O = GDP + phosphate + H(+). Functionally, regulator of microtubule dynamics that plays a key role in myelination by promoting elongation of the myelin sheath. Acts as a microtubule nucleation factor in oligodendrocytes: specifically localizes to the postsynaptic Golgi apparatus region, also named Golgi outpost, and promotes microtubule nucleation, an important step for elongation of the myelin sheath. Required for both uniform polarized growth of distal microtubules as well as directing the branching of proximal processes. Shows magnesium-dependent GTPase activity; the role of the GTPase activity is unclear. In addition to microtubule nucleation activity, also involved in microtubule bundling and stabilization of existing microtubules, thereby maintaining the integrity of the microtubule network. Regulates microtubule dynamics by promoting tubulin acetylation: acts by inhibiting the tubulin deacetylase activity of HDAC6. Also regulates cell migration: phosphorylation by ROCK1 inhibits interaction with HDAC6, resulting in decreased acetylation of tubulin and increased cell motility. Plays a role in cell proliferation by regulating the G1/S-phase transition. Involved in astral microtubule organization and mitotic spindle orientation during early stage of mitosis; this process is regulated by phosphorylation by LIMK2. The polypeptide is Tubulin polymerization-promoting protein (Rattus norvegicus (Rat)).